The primary structure comprises 598 residues: Nicotinamide riboside transporter 1 (598 aa).

11 consecutive transmembrane segments (helical) span residues 48 to 68, 71 to 91, 112 to 132, 174 to 194, 197 to 217, 241 to 261, 273 to 293, 372 to 392, 395 to 415, 447 to 467, and 484 to 504; these read LAYW…SAAL, GLSY…TIIF, FVFG…MSIV, LVGF…KPYH, YLLI…VIYL, AWAW…GSTN, LAIW…VPIF, GALF…YNSS, FLTV…VMIC, AIVA…WEVN, and SFFS…FFPF. Residues S560 and S572 each carry the phosphoserine modification.

Belongs to the purine-cytosine permease (2.A.39) family.

It is found in the cell membrane. High-affinity pH-dependent nicotinamide riboside transporter which also transports thiamine with low affinity. Involved in 5-fluorocytosine sensitivity. The sequence is that of Nicotinamide riboside transporter 1 (NRT1) from Saccharomyces cerevisiae (strain ATCC 204508 / S288c) (Baker's yeast).